Reading from the N-terminus, the 693-residue chain is Golgin subfamily A member 6D (693 aa).

A coiled-coil region spans residues 14 to 611; it reads LEESRQNKLA…KLLELQELVL (598 aa). Disordered stretches follow at residues 20-70, 497-547, and 662-693; these read NKLA…GDSQ, LPGE…GTEQ, and VEPA…MQDT. A compositionally biased stretch (basic and acidic residues) spans 537–547; that stretch reads LPKEKADGTEQ. Polar residues predominate over residues 674 to 693; sequence PHNNPTVQQIVQLSPVMQDT.

The protein belongs to the GOLGA6 family.

This Homo sapiens (Human) protein is Golgin subfamily A member 6D (GOLGA6D).